A 499-amino-acid chain; its full sequence is MYKPKISCLLLGLLSGLVFAPTFLLPALLTLSYLCCLVQKSKDWQEAAKLGYIFGFGHFLSGIYWISIGVSVYISDFWWAIPFALFGLPIILAFFVSASCVFSFFVRNNKYYHFIFCLYWVLFEWVRSWIFTGLPWNLIGYAFSFSDILIQSLNIIGIYGLSFIVIYISTSFYPFFTKQFDQLKVLLLTSSITLAVIITYGSVRLHNHPTNFTDIKVRLVQPSIPQTEKWSEEEFWHNLMLHINLSENSQPIDLVIWSEAALVVPYDIPVVKSELLGLLNSVDATLITGGISDNKKRGEDFELYTAMYALEKNGNKLFEYHKSHLVPFGEYMPFKKILPFKKLTHGFVDYTEGNGGLVYLDKYNLKIKPLICYESIFPDFVRTNNETADVIINVTNDAWYGKSSGPYQHFHISRSRAVENGLPMVRVANNGISAIIDPLGRVIKKLDLNEINYIDGLIPKKLDSPTIFSKFGNITILLIVFFIFLVNYLLDKKLINSRD.

Transmembrane regions (helical) follow at residues 9-29 (LLLG…PALL), 50-70 (LGYI…SIGV), 77-97 (FWWA…FFVS), 114-134 (FIFC…FTGL), 148-168 (ILIQ…VIYI), and 183-203 (LKVL…YGSV). Positions 220–464 (VQPSIPQTEK…DGLIPKKLDS (245 aa)) constitute a CN hydrolase domain. The Proton acceptor role is filled by Glu-259. Lys-322 is a catalytic residue. Cys-372 functions as the Nucleophile in the catalytic mechanism. The helical transmembrane segment at 466 to 486 (TIFSKFGNITILLIVFFIFLV) threads the bilayer.

This sequence belongs to the CN hydrolase family. Apolipoprotein N-acyltransferase subfamily.

It localises to the cell inner membrane. It catalyses the reaction N-terminal S-1,2-diacyl-sn-glyceryl-L-cysteinyl-[lipoprotein] + a glycerophospholipid = N-acyl-S-1,2-diacyl-sn-glyceryl-L-cysteinyl-[lipoprotein] + a 2-acyl-sn-glycero-3-phospholipid + H(+). The protein operates within protein modification; lipoprotein biosynthesis (N-acyl transfer). In terms of biological role, catalyzes the phospholipid dependent N-acylation of the N-terminal cysteine of apolipoprotein, the last step in lipoprotein maturation. The protein is Apolipoprotein N-acyltransferase of Rickettsia bellii (strain RML369-C).